The following is a 342-amino-acid chain: Keratin-associated protein 29-1 (342 aa).

5 consecutive repeat copies span residues 5–9 (CCPEN), 91–95 (CCASD), 239–243 (CCVPP), 309–313 (CCVTG), and 324–328 (CCPPT). The segment at 5–328 (CCPENPTAVP…SSGPGCCPPT (324 aa)) is 5 X 5 AA repeats of C-C-X(3).

The protein belongs to the KRTAP type 10 family.

The sequence is that of Keratin-associated protein 29-1 (Krtap29-1) from Mus musculus (Mouse).